Here is a 32-residue protein sequence, read N- to C-terminus: Alpha-conotoxin RgIA (32 aa).

The propeptide occupies 1 to 19; sequence SNKRKNAAMLDMIAQHAIR. Intrachain disulfides connect Cys-21–Cys-27 and Cys-22–Cys-31.

Belongs to the conotoxin A superfamily. The disulfide bond CysI-CysIII is important for alpha-9-alpha-10 subtype inhibition, whereas the bond CysII-CysIV contributes to GABA(B) modulation. In terms of tissue distribution, expressed by the venom duct.

The protein localises to the secreted. This toxin target two types of receptors, the nicotinic acetylcholine receptor (nAChR) and the G-protein-coupled receptor GABA(B). It specifically inhibits the alpha-9-alpha-10/CHRNA9-CHRNA10 nAChR, with preference for rat receptors. It interacts with the alpha-10(+)/alpha-9(-)interface of the receptor. It shows a two order of magnitude species difference potency for the rat versus human alpha-9-alpha-10 nAChR, due to the Thr-86 located in the alpha-9 nAChR subunit. This toxin also shows inhibition of high voltage-activated (HVA) calcium channels (Cav2.2) by acting on GABA(B) receptors (GABBR1 and GABBR2). In vivo, this toxin produces an acute antinociceptive effect in peripheral nerve-injured rats, which may be related to the inhibition of immune cell buildup at the site of nerve injury. In addition, when intramuscularly injected into rats following chronic constriction injury of the sciatic nerve, this toxin protects peripheral nervous tissues as well as prevents central maladaptive plasticity by inhibiting glial cell activation. The polypeptide is Alpha-conotoxin RgIA (Conus regius (Crown cone)).